Consider the following 183-residue polypeptide: Capsid protein (183 aa).

A disordered region spans residues 143–183 (LPETTVIRRRGRSPRRRTPSPRRRRSQSPRRRRSQSREPQC). Residues 149–176 (IRRRGRSPRRRTPSPRRRRSQSPRRRRS) are compositionally biased toward basic residues. Residues S155, S162, and S170 each carry the phosphoserine; by host modification. The stretch at 155–161 (SPRRRTP) is one 1; half-length repeat. Positions 155 to 177 (SPRRRTPSPRRRRSQSPRRRRSQ) are 3 X 8 AA repeats of S-P-R-R-R-[PR]-S-Q. Positions 158–175 (RRTPSPRRRRSQSPRRRR) match the Bipartite nuclear localization signal motif. Tandem repeats lie at residues 162–169 (SPRRRRSQ) and 170–177 (SPRRRRSQ). An RNA binding region spans residues 177-183 (QSREPQC).

The protein belongs to the orthohepadnavirus core antigen family. In terms of assembly, homodimerizes, then multimerizes. Interacts with cytosol exposed regions of viral L glycoprotein present in the reticulum-to-Golgi compartment. Interacts with human FLNB. Phosphorylated form interacts with host importin alpha; this interaction depends on the exposure of the NLS, which itself depends upon genome maturation and/or phosphorylation of the capsid protein. Interacts with host NUP153. Post-translationally, phosphorylated by host SRPK1, SRPK2, and maybe protein kinase C or GAPDH. Phosphorylation is critical for pregenomic RNA packaging. Protein kinase C phosphorylation is stimulated by HBx protein and may play a role in transport of the viral genome to the nucleus at the late step during the viral replication cycle.

Its subcellular location is the virion. The protein resides in the host cytoplasm. Its function is as follows. Self assembles to form an icosahedral capsid. Most capsids appear to be large particles with an icosahedral symmetry of T=4 and consist of 240 copies of capsid protein, though a fraction forms smaller T=3 particles consisting of 180 capsid proteins. Entering capsids are transported along microtubules to the nucleus. Phosphorylation of the capsid is thought to induce exposure of nuclear localization signal in the C-terminal portion of the capsid protein that allows binding to the nuclear pore complex via the importin (karyopherin-) alpha and beta. Capsids are imported in intact form through the nuclear pore into the nuclear basket, where it probably binds NUP153. Only capsids that contain the mature viral genome can release the viral DNA and capsid protein into the nucleoplasm. Immature capsids get stuck in the basket. Capsids encapsulate the pre-genomic RNA and the P protein. Pre-genomic RNA is reverse-transcribed into DNA while the capsid is still in the cytoplasm. The capsid can then either be directed to the nucleus, providing more genomes for transcription, or bud through the endoplasmic reticulum to provide new virions. In Hepatitis B virus genotype B1 (isolate Japan/Ry30/2002) (HBV-B), this protein is Capsid protein.